Consider the following 57-residue polypeptide: UPF0434 protein Shal_2504 (57 aa).

It belongs to the UPF0434 family.

The chain is UPF0434 protein Shal_2504 from Shewanella halifaxensis (strain HAW-EB4).